Consider the following 238-residue polypeptide: U2 small nuclear ribonucleoprotein A' (238 aa).

3 LRR repeats span residues 53-74 (PTHILDLTNNDLIMIPDLSRRD), 75-95 (DIHTLLLGRNNIVEVDGRLLP), and 97-118 (NVQNLTLSNNSIRRFEDLQRLR). The LRRCT domain occupies 132-170 (NQVCHLANYREHVLRLVPHLETLDFQNVTAEERKSAMSF). The tract at residues 167–189 (AMSFPRQADGDTLGPVNTAIRDN) is disordered.

The protein belongs to the U2 small nuclear ribonucleoprotein A family. As to quaternary structure, belongs to the CWC complex (or CEF1-associated complex), a spliceosome sub-complex reminiscent of a late-stage spliceosome composed of the U2, U5 and U6 snRNAs and at least BUD13, BUD31, BRR2, CDC40, CEF1, CLF1, CUS1, CWC2, CWC15, CWC21, CWC22, CWC23, CWC24, CWC25, CWC27, ECM2, HSH155, IST3, ISY1, LEA1, MSL1, NTC20, PRP8, PRP9, PRP11, PRP19, PRP21, PRP22, PRP45, PRP46, SLU7, SMB1, SMD1, SMD2, SMD3, SMX2, SMX3, SNT309, SNU114, SPP2, SYF1, SYF2, RSE1 and YJU2. Interacts with MSL1.

The protein localises to the nucleus. In terms of biological role, involved in pre-mRNA splicing. Associates to U2 snRNA in a MSL1 dependent manner and is required for normal accumulation of U2 snRNA. Required for the spliceosome assembly and the efficient addition of U2 snRNP onto the pre-mRNA. This chain is U2 small nuclear ribonucleoprotein A' (LEA1), found in Saccharomyces cerevisiae (strain ATCC 204508 / S288c) (Baker's yeast).